The chain runs to 560 residues: MSQRMQQGQPMIILGEDSQRTSGQDAQSMNITAGKAVAEAVRTTLGPKGMDKMLVDSGGQVVVTNDGVTILKEMDIDHPAANMIVEVSETQEDEVGDGTTTAVINAGELLDQAEDLLDSDVHATTIAQGYRQAAEKAKEVLEDNAIEVTEDDRETLTKIAATAMTGKGAESAKDLLSELVVDAVLAVKDDDGIDTNNVSIEKVVGGTIDNSELVEGVIVDKERVDENMPYAVEDANIAILDDALEVRETEIDAEVNVTDPDQLQQFLDQEEKQLKEMVDQLVEVGADAVFVGDGIDDMAQHYLAKEGILAVRRAKSSDLKRLARATGGRVVSSLDDIEADDLGFAGSVGQKDVGGDERIFVEDVEDAKSVTLILRGGTEHVVDELERAIEDSLGVVRTTLEDGKVLPGGGAPETELSLQLREFADSVGGREQLAVEAFAEALDIIPRTLAENAGLDPIDSLVDLRSRHDGGEFAAGLDAYTGEVIDMEEEGVVEPLRVKTQAIESATEAAVMILRIDDVIAAGDLSGGQTGSDDDDGGAPGGMGGGMGGMGGMGGMGGAM.

Residues 525–550 (LSGGQTGSDDDDGGAPGGMGGGMGGM) form a disordered region. Gly residues predominate over residues 538-550 (GAPGGMGGGMGGM).

This sequence belongs to the TCP-1 chaperonin family. As to quaternary structure, the thermosome or CCT complex is a oligomeric complex of two octameric double-ring structures; the complex is probably a heterooligomer of CCT1, CCT2 and CCT3 with yet unknown stoichiometry.

Functionally, molecular chaperone that assists in the folding or refolding of nascent or denatured proteins along with ATP hydrolysis. ATPase activity is highest in thermosome assemblies containing CCT1:CCT2, followed by assemblies containing CCT1:CCT2:CCT3. Required for thermosome ATPase activity. Not required for growth. This chain is Thermosome subunit 1 (cct1), found in Haloferax volcanii (strain ATCC 29605 / DSM 3757 / JCM 8879 / NBRC 14742 / NCIMB 2012 / VKM B-1768 / DS2) (Halobacterium volcanii).